The sequence spans 174 residues: Ribosome maturation factor RimM (174 aa).

The region spanning 97–169 is the PRC barrel domain; that stretch reads GNKFYFHEVI…KVVMDLPEGL (73 aa).

The protein belongs to the RimM family. As to quaternary structure, binds ribosomal protein uS19.

The protein localises to the cytoplasm. An accessory protein needed during the final step in the assembly of 30S ribosomal subunit, possibly for assembly of the head region. Essential for efficient processing of 16S rRNA. May be needed both before and after RbfA during the maturation of 16S rRNA. It has affinity for free ribosomal 30S subunits but not for 70S ribosomes. In Flavobacterium psychrophilum (strain ATCC 49511 / DSM 21280 / CIP 103535 / JIP02/86), this protein is Ribosome maturation factor RimM.